Reading from the N-terminus, the 194-residue chain is Ras-like protein rasS (194 aa).

GTP is bound at residue 10–17 (GPGGVGKS). Residues 32–40 (YDPTLEDSY) carry the Effector region motif. GTP contacts are provided by residues 57–61 (DTAGQ) and 116–119 (NKCD). Positions 168 to 194 (RQSNQHSNSQEQNTDQPIKKKKSCNLL) are disordered. A compositionally biased stretch (low complexity) spans 169–180 (QSNQHSNSQEQN). The residue at position 191 (C191) is a Cysteine methyl ester. C191 carries S-geranylgeranyl cysteine lipidation. The propeptide at 192 to 194 (NLL) is removed in mature form.

This sequence belongs to the small GTPase superfamily. Ras family.

Its subcellular location is the cell membrane. It carries out the reaction GTP + H2O = GDP + phosphate + H(+). Functionally, ras proteins bind GDP/GTP and possess intrinsic GTPase activity. This is Ras-like protein rasS (rasS) from Dictyostelium discoideum (Social amoeba).